A 100-amino-acid chain; its full sequence is uncharacterized protein (100 aa).

In terms of assembly, may interact with ribosomes.

This is an uncharacterized protein from Saccharomyces cerevisiae (strain ATCC 204508 / S288c) (Baker's yeast).